Reading from the N-terminus, the 326-residue chain is ATP-dependent 6-phosphofructokinase (326 aa).

G14 contacts ATP. 24–28 (RAVVR) is an ADP binding site. Residues 75–76 (RF) and 105–108 (GNGS) contribute to the ATP site. N106 contacts Mg(2+). 129-131 (TID) serves as a coordination point for substrate. The active-site Proton acceptor is D131. Position 158 (R158) interacts with ADP. Substrate-binding positions include R166 and 173–175 (MGR). ADP is bound by residues 189–191 (GAE), K215, and 216–218 (KSA). Substrate is bound by residues E225, R248, and 254–257 (HTQR).

It belongs to the phosphofructokinase type A (PFKA) family. ATP-dependent PFK group I subfamily. Prokaryotic clade 'B1' sub-subfamily. As to quaternary structure, homotetramer. The cofactor is Mg(2+).

Its subcellular location is the cytoplasm. It catalyses the reaction beta-D-fructose 6-phosphate + ATP = beta-D-fructose 1,6-bisphosphate + ADP + H(+). It participates in carbohydrate degradation; glycolysis; D-glyceraldehyde 3-phosphate and glycerone phosphate from D-glucose: step 3/4. Its activity is regulated as follows. Allosterically activated by ADP and other diphosphonucleosides, and allosterically inhibited by phosphoenolpyruvate. In terms of biological role, catalyzes the phosphorylation of D-fructose 6-phosphate to fructose 1,6-bisphosphate by ATP, the first committing step of glycolysis. This is ATP-dependent 6-phosphofructokinase from Coxiella burnetii (strain RSA 493 / Nine Mile phase I).